The primary structure comprises 396 residues: Acetate kinase (396 aa).

Mg(2+) is bound at residue Asn8. An ATP-binding site is contributed by Lys15. A substrate-binding site is contributed by Arg89. The Proton donor/acceptor role is filled by Asp146. ATP is bound by residues 206 to 210 (HIGNG), 283 to 285 (DMR), and 331 to 335 (GIGEN). A Mg(2+)-binding site is contributed by Glu383.

It belongs to the acetokinase family. As to quaternary structure, homodimer. Mg(2+) serves as cofactor. Requires Mn(2+) as cofactor.

The protein localises to the cytoplasm. It carries out the reaction acetate + ATP = acetyl phosphate + ADP. The protein operates within metabolic intermediate biosynthesis; acetyl-CoA biosynthesis; acetyl-CoA from acetate: step 1/2. In terms of biological role, catalyzes the formation of acetyl phosphate from acetate and ATP. Can also catalyze the reverse reaction. The chain is Acetate kinase from Streptococcus gordonii (strain Challis / ATCC 35105 / BCRC 15272 / CH1 / DL1 / V288).